The chain runs to 681 residues: MGKLPMKEAALVYLDRSGGLQKFMDDCKYYNDSKQSYAVYRFSILINPCDVVELDAELGNHILHHPLKAAQVFQSVCFVAVKTLSLIGKLQTETQINIVLKLTHLPSLPSYSLDLCEFPLNYASQRFYMMQGIVIAMTTVTKYTQGARFLCSDEVCPFSKGFQYIRVHVPGATESATVRNDFLCRLCSSSLQEDRKFRVLGDKQIIEIITTKVLHAFQGDPKNQPFRFQSLSVFLRDELVNKMKIGNEYKIIGIPVCVKTSQTALCVEANSITPYTAKVPSGISDNFRCLLSLTSSSCWRFTAILANVFASHIVPLGTYNLLKLCLLMSLVQTRDCSSERENCLDILVITSDTLLVDRLLNFSMNLVSRGIRHPVCTEVFPTVSRDKYGTGAVSIQAGSALLARGGVCFIGDLTSHKKDKLEQLQSALESRSVTVFIPGKKFGDDFDQQMTFPIQCSFWSFVDMDSSSRRNVQKASTLIGQMDCSLIPANLAEAFGLLVNCKESSPCHPLLPTVQHTLKKAVDPKGPPYLASKQFTTEDFEKLLAFAKNLNVEFSLEAERMIHGYYLASRRIRTDSIHGSKLSANALKYLVSLSEAHARLNLRNKVLREDVLIAALLFEISLTLKYGATAFCVAPNALFPFELYDEDYLEQRDLYLTQCQQQLQHFIATCGPGTAVLSSDE.

At Ser292 the chain carries Phosphoserine. One can recognise an MCM domain in the interval 533–621 (KQFTTEDFEK…LIAALLFEIS (89 aa)).

Plays an important role in meiotic recombination and associated DNA double-strand break repair. This chain is Minichromosome maintenance domain-containing protein 2 (Mcmdc2), found in Rattus norvegicus (Rat).